Here is a 152-residue protein sequence, read N- to C-terminus: Lipoprotein signal peptidase (152 aa).

The next 2 helical transmembrane spans lie at 55–75 (NKMW…VFYM) and 85–105 (LGIS…DRVF). Active-site residues include D111 and D129. Residues 124-144 (VFNIADSALCIGVVLIIIQTL) form a helical membrane-spanning segment.

Belongs to the peptidase A8 family.

The protein localises to the cell membrane. The catalysed reaction is Release of signal peptides from bacterial membrane prolipoproteins. Hydrolyzes -Xaa-Yaa-Zaa-|-(S,diacylglyceryl)Cys-, in which Xaa is hydrophobic (preferably Leu), and Yaa (Ala or Ser) and Zaa (Gly or Ala) have small, neutral side chains.. The protein operates within protein modification; lipoprotein biosynthesis (signal peptide cleavage). Functionally, this protein specifically catalyzes the removal of signal peptides from prolipoproteins. The chain is Lipoprotein signal peptidase from Bacillus cereus (strain G9842).